A 744-amino-acid chain; its full sequence is Kinesin-like protein KIF2A (744 aa).

Positions 66 to 186 (LVPDEEIEPS…QQELREKRAQ (121 aa)) are disordered. Ser75 is subject to Phosphoserine. 2 positions are modified to phosphothreonine: Thr78 and Thr97. Phosphoserine is present on Ser100. At Lys102 the chain carries N6-acetyllysine. A compositionally biased stretch (polar residues) spans 123–140 (FPEQSSSAQQNGSVSDIS). 2 positions are modified to phosphoserine: Ser135 and Ser140. Residues 154–187 (RRKSNCVKEVEKLQEKREKRRLQQQELREKRAQD) are a coiled coil. The span at 159–186 (CVKEVEKLQEKREKRRLQQQELREKRAQ) shows a compositional bias: basic and acidic residues. The region spanning 223 to 553 (RICVCVRKRP…LRYANRVKEF (331 aa)) is the Kinesin motor domain. Position 313–320 (313–320 (GQTGSGKT)) interacts with ATP. Residues 698–737 (ATQLEAILEQKIDILTELRDKVKSFRAALQEEEQASKQIN) adopt a coiled-coil conformation.

This sequence belongs to the TRAFAC class myosin-kinesin ATPase superfamily. Kinesin family. MCAK/KIF2 subfamily. In terms of assembly, interacts with AURKA and PLK1. Interacts with PSRC1. Interacts with MCRS1; the interaction enhances recruitment of KIF2A to the minus ends of spindle microtubules which promotes chromosome alignment.

It is found in the cytoplasm. The protein localises to the cytoskeleton. Its subcellular location is the microtubule organizing center. The protein resides in the centrosome. It localises to the spindle pole. It is found in the spindle. Its function is as follows. Plus end-directed microtubule-dependent motor required for normal brain development. May regulate microtubule dynamics during axonal growth. Required for normal progression through mitosis. Required for normal congress of chromosomes at the metaphase plate. Required for normal spindle dynamics during mitosis. Promotes spindle turnover. Implicated in formation of bipolar mitotic spindles. Has microtubule depolymerization activity. This chain is Kinesin-like protein KIF2A, found in Pongo abelii (Sumatran orangutan).